A 1488-amino-acid chain; its full sequence is Chromosome partition protein MukB (1488 aa).

Gly-34–Ser-41 contacts ATP. Coiled coils occupy residues Leu-326–Gln-418, Leu-444–His-472, and Arg-509–Pro-602. Residues Pro-666 to Arg-783 are flexible hinge. 3 coiled-coil regions span residues Glu-835–Glu-923, Glu-977–Gly-1116, and Val-1209–Val-1265. The segment at Ala-1049 to Arg-1074 is disordered. Residues Ser-1051–His-1065 are compositionally biased toward basic and acidic residues.

The protein belongs to the SMC family. MukB subfamily. As to quaternary structure, homodimerization via its hinge domain. Binds to DNA via its C-terminal region. Interacts, and probably forms a ternary complex, with MukE and MukF via its C-terminal region. The complex formation is stimulated by calcium or magnesium. Interacts with tubulin-related protein FtsZ.

It localises to the cytoplasm. It is found in the nucleoid. In terms of biological role, plays a central role in chromosome condensation, segregation and cell cycle progression. Functions as a homodimer, which is essential for chromosome partition. Involved in negative DNA supercoiling in vivo, and by this means organize and compact chromosomes. May achieve or facilitate chromosome segregation by condensation DNA from both sides of a centrally located replisome during cell division. The protein is Chromosome partition protein MukB of Salmonella gallinarum (strain 287/91 / NCTC 13346).